A 241-amino-acid chain; its full sequence is Microneme antigen (241 aa).

The first 34 residues, 1–34 (MRLPIRFPKYVLYGMASAVWSILFLHILVGDTMS), serve as a signal peptide directing secretion. Residues 35-103 (AADALSWSGG…ATGRGPSFVH (69 aa)) constitute a propeptide that is removed on maturation. Positions 61–83 (HEMGKELEQQHGAEEQQMQRDTK) are enriched in basic and acidic residues. A disordered region spans residues 61–92 (HEMGKELEQQHGAEEQQMQRDTKPAAFSNPPH). PAN domains lie at 112 to 181 (CFPH…PRSC) and 185 to 241 (CTDN…FNKS). 6 disulfides stabilise this stretch: Cys-112/Cys-181, Cys-137/Cys-159, Cys-141/Cys-147, Cys-185/Cys-189, Cys-210/Cys-230, and Cys-214/Cys-220. Ser-121 contacts a carbohydrate. Positions 162, 169, and 174 each coordinate a carbohydrate.

It belongs to the microneme antigen family. Homodimer or heterodimer of major microneme antigen and microneme antigen. In terms of processing, contains six disulfide bonds.

Its subcellular location is the cytoplasmic vesicle. The protein resides in the secretory vesicle. It localises to the microneme. Functionally, galactose-binding lectin. Plays a role in adhesion to the host cell. Has a potential role in invasion of host cells. This Sarcocystis muris protein is Microneme antigen.